Here is a 231-residue protein sequence, read N- to C-terminus: MMTTLTARPEAITFDPQQTALIVVDMQNAYATPGGYLDLAGFDVSTTRPVIANIQTAVTAARTAGMLIIWFQNGWDEQYVEAGGPGSPNYHKSNALKTMRNQPLLQGKLLAKGSWDYQLVDELVPQPGDIVLPKPRYSGFFNTPLDSILRSRGIRHLVFTGIATNVCVESTLRDGFFLEYFGVVLEDATHQAGPEFAQKAALFNIETFFGWVSDVETFCDALSSTSFARIA.

D25 (proton acceptor) is an active-site residue. Residue K134 is part of the active site. C167 functions as the Nucleophile in the catalytic mechanism.

It belongs to the isochorismatase family. RutB subfamily.

It catalyses the reaction (Z)-3-ureidoacrylate + H2O + H(+) = (Z)-3-aminoacrylate + NH4(+) + CO2. It carries out the reaction (Z)-3-ureidoacrylate + H2O = (Z)-3-aminoacrylate + carbamate + H(+). The catalysed reaction is (Z)-2-methylureidoacrylate + H2O + H(+) = (Z)-2-methylaminoacrylate + NH4(+) + CO2. Functionally, hydrolyzes ureidoacrylate to form aminoacrylate and carbamate. The carbamate hydrolyzes spontaneously, thereby releasing one of the nitrogen atoms of the pyrimidine ring as ammonia and one of its carbon atoms as CO2. This Escherichia coli O18:K1:H7 (strain IHE3034 / ExPEC) protein is Ureidoacrylate amidohydrolase RutB.